The following is a 345-amino-acid chain: MIILDNRFVTPLSIEEDIDIEYNLRPTQLEEYIGQSKVREKLRIFIKAAKNRGESLDHVLLYGPPGLGKTTLANIIAKEMKGNLKITSGPAIERAGDLAAILTTLNEHDVLFIDEIHRLNRAVEEILYPAMEDYALDIVIGKGAAAKSIRLDLPHFTLIGATTRVGLLTAPLRDRFGVLCPMEFYNEEELKDIIVRSSKILNVKTEEEAAYELARRSRGTPRIANRILKRVRDYSEVMGDGIIDLNMTNKALNLLEIDKEGFDSIDTKILKAILDNFNGGPVGLETLAYFIGEELDTIEDVYEPYLLQKGFIMRTPRGRVATEKTYKHFKREIKKENINQYKFKI.

The large ATPase domain (RuvB-L) stretch occupies residues 4–185 (LDNRFVTPLS…FGVLCPMEFY (182 aa)). Residues L24, R25, G66, K69, T70, T71, 132 to 134 (EDY), R175, Y185, and R222 each bind ATP. T70 is a Mg(2+) binding site. The tract at residues 186–256 (NEEELKDIIV…MTNKALNLLE (71 aa)) is small ATPAse domain (RuvB-S). The tract at residues 259–345 (KEGFDSIDTK…ENINQYKFKI (87 aa)) is head domain (RuvB-H). The DNA site is built by R314 and R319.

Belongs to the RuvB family. In terms of assembly, homohexamer. Forms an RuvA(8)-RuvB(12)-Holliday junction (HJ) complex. HJ DNA is sandwiched between 2 RuvA tetramers; dsDNA enters through RuvA and exits via RuvB. An RuvB hexamer assembles on each DNA strand where it exits the tetramer. Each RuvB hexamer is contacted by two RuvA subunits (via domain III) on 2 adjacent RuvB subunits; this complex drives branch migration. In the full resolvosome a probable DNA-RuvA(4)-RuvB(12)-RuvC(2) complex forms which resolves the HJ.

The protein localises to the cytoplasm. It catalyses the reaction ATP + H2O = ADP + phosphate + H(+). The RuvA-RuvB-RuvC complex processes Holliday junction (HJ) DNA during genetic recombination and DNA repair, while the RuvA-RuvB complex plays an important role in the rescue of blocked DNA replication forks via replication fork reversal (RFR). RuvA specifically binds to HJ cruciform DNA, conferring on it an open structure. The RuvB hexamer acts as an ATP-dependent pump, pulling dsDNA into and through the RuvAB complex. RuvB forms 2 homohexamers on either side of HJ DNA bound by 1 or 2 RuvA tetramers; 4 subunits per hexamer contact DNA at a time. Coordinated motions by a converter formed by DNA-disengaged RuvB subunits stimulates ATP hydrolysis and nucleotide exchange. Immobilization of the converter enables RuvB to convert the ATP-contained energy into a lever motion, pulling 2 nucleotides of DNA out of the RuvA tetramer per ATP hydrolyzed, thus driving DNA branch migration. The RuvB motors rotate together with the DNA substrate, which together with the progressing nucleotide cycle form the mechanistic basis for DNA recombination by continuous HJ branch migration. Branch migration allows RuvC to scan DNA until it finds its consensus sequence, where it cleaves and resolves cruciform DNA. In Clostridium tetani (strain Massachusetts / E88), this protein is Holliday junction branch migration complex subunit RuvB.